A 283-amino-acid polypeptide reads, in one-letter code: Bifunctional protein FolD (283 aa).

Residues 165–167 (GAS), Ser-190, and Ile-231 contribute to the NADP(+) site.

It belongs to the tetrahydrofolate dehydrogenase/cyclohydrolase family. As to quaternary structure, homodimer.

It carries out the reaction (6R)-5,10-methylene-5,6,7,8-tetrahydrofolate + NADP(+) = (6R)-5,10-methenyltetrahydrofolate + NADPH. The catalysed reaction is (6R)-5,10-methenyltetrahydrofolate + H2O = (6R)-10-formyltetrahydrofolate + H(+). It participates in one-carbon metabolism; tetrahydrofolate interconversion. Functionally, catalyzes the oxidation of 5,10-methylenetetrahydrofolate to 5,10-methenyltetrahydrofolate and then the hydrolysis of 5,10-methenyltetrahydrofolate to 10-formyltetrahydrofolate. The protein is Bifunctional protein FolD of Bordetella bronchiseptica (strain ATCC BAA-588 / NCTC 13252 / RB50) (Alcaligenes bronchisepticus).